We begin with the raw amino-acid sequence, 291 residues long: ATP synthase gamma chain (291 aa).

It belongs to the ATPase gamma chain family. F-type ATPases have 2 components, CF(1) - the catalytic core - and CF(0) - the membrane proton channel. CF(1) has five subunits: alpha(3), beta(3), gamma(1), delta(1), epsilon(1). CF(0) has three main subunits: a, b and c.

The protein resides in the cell inner membrane. Produces ATP from ADP in the presence of a proton gradient across the membrane. The gamma chain is believed to be important in regulating ATPase activity and the flow of protons through the CF(0) complex. The protein is ATP synthase gamma chain of Rhodopseudomonas palustris (strain HaA2).